The sequence spans 71 residues: EAGEECDCGSPENPCCDAATCKLRPGAQCAEGLCCDQCKFMKEGTVCRARGDDVNDYCNGISAGCPRNPFH.

Residues 1 to 71 (EAGEECDCGS…SAGCPRNPFH (71 aa)) form the Disintegrin domain. Intrachain disulfides connect Cys6–Cys21, Cys8–Cys16, Cys15–Cys38, Cys29–Cys35, Cys34–Cys58, and Cys47–Cys65. Residues 50-52 (RGD) carry the Cell attachment site motif.

This sequence belongs to the venom metalloproteinase (M12B) family. P-II subfamily. P-IIa sub-subfamily. Monomer (disintegrin). In terms of tissue distribution, expressed by the venom gland.

It is found in the secreted. Functionally, inhibits fibrinogen interaction with platelets. Acts by binding to alpha-IIb/beta-3 (ITGA2B/ITGB3) on the platelet surface and inhibits aggregation induced by ADP, thrombin, platelet-activating factor and collagen. The chain is Disintegrin applaggin from Agkistrodon piscivorus piscivorus (Eastern cottonmouth).